Here is a 460-residue protein sequence, read N- to C-terminus: MSNKMWGGRFGEGPDRIMEEINASIGFDQRFFAQDIRGSKAHCRMLAEKGIISSEDAAQIVAGLDVVLAEIENGTFHFKRELEDIHMNVESRLADLIGAAAGRLHTARSRNDQVATDFKLYIRDTIDHLDEQLADFQRALVDRAEEHAATIMPGFTHLQTAQPVTFGHHCLAYAEMAGRDRGRLADARRRLNESPLGAAALAGTSFPIDRHMTAAELGFDGPTRNSLDSVSDRDFVLETLSAAAIAATHLSRLAEEIVIWSTPGFDFVRLTDGFTTGSSIMPQKRNPDAAELVRAKSGRVIGDLTSLLIVMKGLPLAYSKDMQEDKEAAFDALDALSLSLAAMTGMVRTLTVNETAMRNAASRGFSTATDLADWLVRALGLPFRQAHHATGALVAKAEKKGTDLDGLTLAEMQEVEPGITDEVYSVLGVDNSVASRTSFGGTAPDNIRAAVRRWRDELGS.

The protein belongs to the lyase 1 family. Argininosuccinate lyase subfamily.

It is found in the cytoplasm. The enzyme catalyses 2-(N(omega)-L-arginino)succinate = fumarate + L-arginine. It functions in the pathway amino-acid biosynthesis; L-arginine biosynthesis; L-arginine from L-ornithine and carbamoyl phosphate: step 3/3. The sequence is that of Argininosuccinate lyase from Parvibaculum lavamentivorans (strain DS-1 / DSM 13023 / NCIMB 13966).